The chain runs to 263 residues: MLFAFGLTLFAGLATGIGGLIAVARKTVTEGFLAGSLGFSVGVMLYVSFVEILPGAFDELTSVWGEKGGSWAAVIGFFGGIALIAIIDRLVPTAINPHEPSTVGGAVEGFERRNRMMKMGVLTALAIAIHNFPEGFATFLAGLSDPMIAIPVAVAIAIHNIPEGIAVAVPLREATGSRRKALGWATLSGLAEPAGALIGFLLLMPFIGPEALGLCFAAVAGVMVFISVDELLPTAISSGKHHTAIYGLIAGMAVMAISLLLFI.

5 consecutive transmembrane segments (helical) span residues 1–21 (MLFAFGLTLFAGLATGIGGLI), 37–57 (LGFSVGVMLYVSFVEILPGAF), 68–88 (GGSWAAVIGFFGGIALIAIID), 116–136 (MMKMGVLTALAIAIHNFPEGF), and 138–158 (TFLAGLSDPMIAIPVAVAIAI). Residues Asn-131 and Glu-134 each contribute to the Fe(2+) site. Residue Glu-134 coordinates Zn(2+). His-159 provides a ligand contact to Zn(2+). Positions 160, 163, and 192 each coordinate Fe(2+). Glu-163 is a Zn(2+) binding site. Transmembrane regions (helical) follow at residues 184–204 (WATLSGLAEPAGALIGFLLLM), 206–226 (FIGPEALGLCFAAVAGVMVFI), and 243–263 (TAIYGLIAGMAVMAISLLLFI).

It belongs to the ZIP transporter (TC 2.A.5) family. ZupT subfamily.

Its subcellular location is the cell membrane. The catalysed reaction is Zn(2+)(in) = Zn(2+)(out). Functionally, mediates zinc uptake. May also transport other divalent cations. The polypeptide is Zinc transporter ZupT (Corynebacterium glutamicum (strain ATCC 13032 / DSM 20300 / JCM 1318 / BCRC 11384 / CCUG 27702 / LMG 3730 / NBRC 12168 / NCIMB 10025 / NRRL B-2784 / 534)).